Reading from the N-terminus, the 116-residue chain is Flagellar transcriptional regulator FlhD (116 aa).

Belongs to the FlhD family. As to quaternary structure, homodimer; disulfide-linked. Forms a heterohexamer composed of two FlhC and four FlhD subunits. Each FlhC binds a FlhD dimer, forming a heterotrimer, and a hexamer assembles by dimerization of two heterotrimers.

The protein localises to the cytoplasm. In terms of biological role, functions in complex with FlhC as a master transcriptional regulator that regulates transcription of several flagellar and non-flagellar operons by binding to their promoter region. Activates expression of class 2 flagellar genes, including fliA, which is a flagellum-specific sigma factor that turns on the class 3 genes. Also regulates genes whose products function in a variety of physiological pathways. The sequence is that of Flagellar transcriptional regulator FlhD from Salmonella arizonae (strain ATCC BAA-731 / CDC346-86 / RSK2980).